Consider the following 210-residue polypeptide: Small ribosomal subunit protein uS4 (210 aa).

The region spanning 100–160 (GRLDNVVYRM…EKSKNQLRVK (61 aa)) is the S4 RNA-binding domain.

Belongs to the universal ribosomal protein uS4 family. In terms of assembly, part of the 30S ribosomal subunit. Contacts protein S5. The interaction surface between S4 and S5 is involved in control of translational fidelity.

One of the primary rRNA binding proteins, it binds directly to 16S rRNA where it nucleates assembly of the body of the 30S subunit. Functionally, with S5 and S12 plays an important role in translational accuracy. The sequence is that of Small ribosomal subunit protein uS4 from Alcanivorax borkumensis (strain ATCC 700651 / DSM 11573 / NCIMB 13689 / SK2).